The primary structure comprises 714 residues: Zinc finger matrin-type protein 1 (714 aa).

Residues 89-119 (NFCKPCGVVLQHESERISHFESEIHAQNVKF) form a Matrin-type 1 zinc finger. Positions 172-214 (HYVGKSHSPTQNQSLEEHDQVSPSTCSPKMDEPNTTPAPPPFL) are disordered. The Matrin-type 2 zinc-finger motif lies at 230-254 (YVCHICSITFTSLHMFRSHMQGTEH). The segment covering 417–434 (RERVDSEHRQRPCEERFS) has biased composition (basic and acidic residues). Disordered stretches follow at residues 417 to 469 (RERV…NDDF) and 571 to 714 (MPAS…ILGF). Polar residues-rich tracts occupy residues 437 to 446 (APQTYQQEYS) and 575 to 588 (LSLSQQEDNPSSYN). Residues 609-619 (SHRRRRQKRKR) show a composition bias toward basic residues. 2 stretches are compositionally biased toward basic and acidic residues: residues 620–632 (HLEEGKERPEKEQ) and 640–662 (SYQDKDLDKDKLIKQSKREEDKA). Basic residues predominate over residues 669-678 (TKHRRKKRKH).

Its subcellular location is the nucleus. This Mus musculus (Mouse) protein is Zinc finger matrin-type protein 1 (Zmat1).